A 365-amino-acid polypeptide reads, in one-letter code: Flagellar P-ring protein (365 aa).

A signal peptide spans 1-21; it reads MKSLRLVALFCCLLPLGMAHA.

The protein belongs to the FlgI family. As to quaternary structure, the basal body constitutes a major portion of the flagellar organelle and consists of four rings (L,P,S, and M) mounted on a central rod.

It localises to the periplasm. The protein localises to the bacterial flagellum basal body. In terms of biological role, assembles around the rod to form the L-ring and probably protects the motor/basal body from shearing forces during rotation. The chain is Flagellar P-ring protein from Aeromonas hydrophila subsp. hydrophila (strain ATCC 7966 / DSM 30187 / BCRC 13018 / CCUG 14551 / JCM 1027 / KCTC 2358 / NCIMB 9240 / NCTC 8049).